The following is a 360-amino-acid chain: Photosystem II protein D1 (360 aa).

3 helical membrane passes run 29–46 (YIGWFGVLMIPTLLTATS), 118–133 (HFFIGICAYMGREWEL), and 142–156 (WIAVAFSAPVAAATA). Residue His118 coordinates chlorophyll a. Tyr126 contacts pheophytin a. Positions 170 and 189 each coordinate [CaMn4O5] cluster. The chain crosses the membrane as a helical span at residues 197-218 (FHMMGVAGVFGGSLFSAMHGSL). Position 198 (His198) interacts with chlorophyll a. A quinone-binding positions include His215 and 264-265 (SF). Fe cation is bound at residue His215. Residue His272 coordinates Fe cation. A helical transmembrane segment spans residues 274–288 (FLALWPVVCICVTAL). Residues His332, Glu333, Asp342, and Ala344 each contribute to the [CaMn4O5] cluster site. Positions 345–360 (SEVSLPVALNKVEING) are excised as a propeptide.

Belongs to the reaction center PufL/M/PsbA/D family. In terms of assembly, PSII is composed of 1 copy each of membrane proteins PsbA, PsbB, PsbC, PsbD, PsbE, PsbF, PsbH, PsbI, PsbJ, PsbK, PsbL, PsbM, PsbT, PsbY, PsbZ, Psb30/Ycf12, at least 3 peripheral proteins of the oxygen-evolving complex and a large number of cofactors. It forms dimeric complexes. The cofactor is The D1/D2 heterodimer binds P680, chlorophylls that are the primary electron donor of PSII, and subsequent electron acceptors. It shares a non-heme iron and each subunit binds pheophytin, quinone, additional chlorophylls, carotenoids and lipids. D1 provides most of the ligands for the Mn4-Ca-O5 cluster of the oxygen-evolving complex (OEC). There is also a Cl(-1) ion associated with D1 and D2, which is required for oxygen evolution. The PSII complex binds additional chlorophylls, carotenoids and specific lipids.. Post-translationally, tyr-161 forms a radical intermediate that is referred to as redox-active TyrZ, YZ or Y-Z. In terms of processing, C-terminally processed by CTPA; processing is essential to allow assembly of the oxygen-evolving complex and thus photosynthetic growth.

The protein localises to the plastid. It localises to the chloroplast thylakoid membrane. It catalyses the reaction 2 a plastoquinone + 4 hnu + 2 H2O = 2 a plastoquinol + O2. In terms of biological role, photosystem II (PSII) is a light-driven water:plastoquinone oxidoreductase that uses light energy to abstract electrons from H(2)O, generating O(2) and a proton gradient subsequently used for ATP formation. It consists of a core antenna complex that captures photons, and an electron transfer chain that converts photonic excitation into a charge separation. The D1/D2 (PsbA/PsbD) reaction center heterodimer binds P680, the primary electron donor of PSII as well as several subsequent electron acceptors. This is Photosystem II protein D1 from Galdieria sulphuraria (Red alga).